The sequence spans 1266 residues: SUMO-interacting motif-containing protein 1 (1266 aa).

Positions 1 to 35 are disordered; the sequence is MEDFIVISDDSGSESSAGTRSGRARRLRRALSRTP. A compositionally biased stretch (basic residues) spans 22 to 31; that stretch reads GRARRLRRAL. Residues 45 to 49 carry the SUMO interaction motif 1 (SIM); mediates the binding to polysumoylated substrates motif; it reads FIDLT. The short motif at 64–68 is the SUMO interaction motif 2 (SIM); mediates the binding to polysumoylated substrates element; that stretch reads VIDLT. Low complexity-rich tracts occupy residues 183–197 and 532–553; these read SPFS…SSSN and SSGG…VPQS. Disordered regions lie at residues 183-206, 532-732, 756-812, and 1024-1052; these read SPFS…PCPQ, SSGG…SGDV, NRHS…PGSA, and LTPP…PQPN. The segment covering 560–571 has biased composition (polar residues); it reads SPGSVSQSSGDV. The segment covering 764–777 has biased composition (low complexity); sequence SAPSSPSCSANPLS. Residues 779-1266 form an interaction with SLF2 region; that stretch reads QSEFSSEKRP…NPDTEPASER (488 aa). A required for inhibition of CAPN3 protease activity region spans residues 857 to 1266; it reads SKGQKLEPIP…NPDTEPASER (410 aa). The tract at residues 865–1200 is NSE5-like domain; that stretch reads IPHRRLRMVT…IDRKDLIIKR (336 aa).

As to quaternary structure, forms a heterodimer with SLF2. Interacts (via SIM domains) with SUMO1 and SUMO2. Interacts with CAPN3 and CTBP1. Interacts with SMC6 and ZNF451.

The protein resides in the nucleus. It localises to the PML body. Its function is as follows. Inhibits the protease activity of CAPN3. May play a role in SMC5-SMC6 complex recruitment for viral restriction. Forms a complex with SLF2 and this complex is required to recruit SMC5-SMC6 complex to PML nuclear bodies and sites of viral replication. The polypeptide is SUMO-interacting motif-containing protein 1 (Simc1) (Rattus norvegicus (Rat)).